The sequence spans 126 residues: Glycine cleavage system H protein (126 aa).

The Lipoyl-binding domain occupies 21–103; the sequence is TATIGISEHA…YEGGWIVKVK (83 aa). An N6-lipoyllysine modification is found at lysine 62.

Belongs to the GcvH family. In terms of assembly, the glycine cleavage system is composed of four proteins: P, T, L and H. Requires (R)-lipoate as cofactor.

In terms of biological role, the glycine cleavage system catalyzes the degradation of glycine. The H protein shuttles the methylamine group of glycine from the P protein to the T protein. The chain is Glycine cleavage system H protein from Vibrio campbellii (strain ATCC BAA-1116).